A 304-amino-acid chain; its full sequence is Tritrans,polycis-undecaprenyl-diphosphate synthase (geranylgeranyl-diphosphate specific) (304 aa).

Residue Asp-33 is part of the active site. Mg(2+) is bound at residue Asp-33. Residues 34 to 37 (GNRR), Lys-46, His-50, and 78 to 80 (STE) contribute to the substrate site. The Proton acceptor role is filled by Asn-81. Residues Phe-82, Arg-84, Arg-203, and 209–211 (RTS) each bind substrate.

Belongs to the UPP synthase family. As to quaternary structure, homodimer. Mg(2+) is required as a cofactor.

It catalyses the reaction geranylgeranyl diphosphate + 7 isopentenyl diphosphate = tri-trans,hepta-cis-undecaprenyl diphosphate + 7 diphosphate. Functionally, catalyzes the sequential condensation of isopentenyl diphosphate (IPP) with geranylgeranyl diphosphate (GGPP) to yield (2Z,6Z,10Z,14Z,18Z,22Z,26Z,30E,34E,38E)-undecaprenyl diphosphate (tritrans,heptacis-UPP). It is probably the precursor of glycosyl carrier lipids. The polypeptide is Tritrans,polycis-undecaprenyl-diphosphate synthase (geranylgeranyl-diphosphate specific) (Haloarcula marismortui (strain ATCC 43049 / DSM 3752 / JCM 8966 / VKM B-1809) (Halobacterium marismortui)).